The sequence spans 495 residues: Germacrene A acid 8-beta-hydroxylase (495 aa).

A helical; Signal-anchor for type II membrane protein transmembrane segment spans residues 3–23; sequence PFTTFSLVASSLILLICWALV. An N-linked (GlcNAc...) asparagine glycan is attached at Asn-103. Cys-433 provides a ligand contact to heme.

Belongs to the cytochrome P450 family. Heme serves as cofactor. Mostly expressed in leaves and flowers, and, to a lower extent, in roots and stems.

It is found in the membrane. It carries out the reaction germacra-1(10),4,11(13)-trien-12-oate + reduced [NADPH--hemoprotein reductase] + O2 = 8beta-hydroxygermacra-1(10),4,11(13)-trien-12-oate + oxidized [NADPH--hemoprotein reductase] + H2O + H(+). The enzyme catalyses germacra-1(10),4,11(13)-trien-12-oate + reduced [NADPH--hemoprotein reductase] + O2 = 8-epi-inunolide + oxidized [NADPH--hemoprotein reductase] + 2 H2O. It catalyses the reaction germacra-1(10),4,11(13)-trien-12-oate + reduced [NADPH--hemoprotein reductase] + O2 = 8alpha-hydroxygermacra-1(10),4,11(13)-trien-12-oate + oxidized [NADPH--hemoprotein reductase] + H2O + H(+). Its pathway is secondary metabolite biosynthesis; terpenoid biosynthesis. In terms of biological role, involved in the biosynthesis of germacrene-derived sesquiterpene lactones. Hydroxylates germacrene A acid to 8-beta-hydroxy-germacrene A and 8-alpha-hydroxy-germacrene A acids. Unlike 8-alpha-hydroxy-germacrene A acid with is spontaneously converted into inunolide (12, 8-alpha), 8-beta-hydroxy-germacrene A cannot undergo spontaneous lactonization. This Inula hupehensis (Inula helianthus-aquatilis subsp. hupehensis) protein is Germacrene A acid 8-beta-hydroxylase.